We begin with the raw amino-acid sequence, 317 residues long: L-lactate dehydrogenase 1 (317 aa).

NAD(+)-binding positions include V17, D38, K43, Y69, and 83–84 (GA). Substrate is bound by residues Q86 and R92. NAD(+)-binding positions include S105, 122 to 124 (ATN), and S147. 124–127 (NPVD) contributes to the substrate binding site. Residue 152 to 155 (DSAR) coordinates substrate. The active-site Proton acceptor is the H179. Y223 is subject to Phosphotyrosine. T232 contacts substrate.

It belongs to the LDH/MDH superfamily. LDH family. As to quaternary structure, homotetramer.

It localises to the cytoplasm. The enzyme catalyses (S)-lactate + NAD(+) = pyruvate + NADH + H(+). The protein operates within fermentation; pyruvate fermentation to lactate; (S)-lactate from pyruvate: step 1/1. Its function is as follows. Catalyzes the conversion of lactate to pyruvate (Potential). Appears to be the primary factor that allows S.aureus growth during nitrosative stress in both aerobically and anaerobically cultured cells. In Staphylococcus aureus (strain USA300), this protein is L-lactate dehydrogenase 1.